The sequence spans 710 residues: mRNA export factor crp79 (710 aa).

RRM domains follow at residues 19–102 and 222–292; these read IYVG…KLTI and HFKQ…PTTP. The span at 333-348 shows a compositional bias: polar residues; it reads QWGSVSTTGVSNQQNH. The tract at residues 333–357 is disordered; it reads QWGSVSTTGVSNQQNHPAAWNPDNK. Positions 401–474 constitute an RRM 3 domain; the sequence is EDLFSPFGSI…DRIRRLQAFF (74 aa). A compositionally biased stretch (polar residues) spans 502–524; that stretch reads TIRKPIESSTNKISENPTTLSSK. The disordered stretch occupies residues 502 to 544; it reads TIRKPIESSTNKISENPTTLSSKVENKNEPKTGENKEPSQTNE. Basic and acidic residues predominate over residues 525–538; the sequence is VENKNEPKTGENKE.

The protein localises to the cytoplasm. It is found in the nucleus. Its function is as follows. Binds the poly(A) tail of mRNA. Involved in the export of mRNA from the nucleus to the cytoplasm. This Schizosaccharomyces pombe (strain 972 / ATCC 24843) (Fission yeast) protein is mRNA export factor crp79 (crp79).